The chain runs to 364 residues: 3-dehydroquinate synthase (364 aa).

Residues 71 to 76, 105 to 109, 129 to 130, Lys142, Lys151, and 169 to 172 each bind NAD(+); these read DGEQYK, GVIGD, TT, and CLKT. 3 residues coordinate Zn(2+): Glu184, His247, and His264.

Belongs to the sugar phosphate cyclases superfamily. Dehydroquinate synthase family. It depends on Co(2+) as a cofactor. Requires Zn(2+) as cofactor. NAD(+) is required as a cofactor.

It is found in the cytoplasm. It carries out the reaction 7-phospho-2-dehydro-3-deoxy-D-arabino-heptonate = 3-dehydroquinate + phosphate. It participates in metabolic intermediate biosynthesis; chorismate biosynthesis; chorismate from D-erythrose 4-phosphate and phosphoenolpyruvate: step 2/7. Functionally, catalyzes the conversion of 3-deoxy-D-arabino-heptulosonate 7-phosphate (DAHP) to dehydroquinate (DHQ). The protein is 3-dehydroquinate synthase of Klebsiella pneumoniae (strain 342).